A 181-amino-acid chain; its full sequence is Large ribosomal subunit protein eL18 (181 aa).

The tract at residues 152–181 (WGKAPGQRGSHSAPYVRSEGRKFERAHGLK) is disordered. Residues 169–181 (SEGRKFERAHGLK) are compositionally biased toward basic and acidic residues.

The protein belongs to the eukaryotic ribosomal protein eL18 family.

The protein resides in the cytoplasm. This is Large ribosomal subunit protein eL18 (RPL18) from Tetrahymena thermophila.